A 230-amino-acid chain; its full sequence is MKKIIHNDWQDVLQGEFEQAYYAKLHEFLKHEYATQNIHPDMYHIFQAFEWTPFSKVKVVILGQDPYHGQNQAHGLSFSVQPGVQVPPSLQNIYKELQSDLGIAPVQHGYLKKWADQGVLLLNSVLTVRDGQAYSHQGHGWERLTDTAIQALSEREQPVVFILWGKAARDKIKLIDQSRNIIIQSAHPSPLSAYRGFFGSKPFSKTNEALEAMGETPIDWQLPTEVLEEK.

Aspartate 65 functions as the Proton acceptor in the catalytic mechanism.

The protein belongs to the uracil-DNA glycosylase (UDG) superfamily. UNG family.

The protein resides in the cytoplasm. It catalyses the reaction Hydrolyzes single-stranded DNA or mismatched double-stranded DNA and polynucleotides, releasing free uracil.. Functionally, excises uracil residues from the DNA which can arise as a result of misincorporation of dUMP residues by DNA polymerase or due to deamination of cytosine. The protein is Uracil-DNA glycosylase of Pediococcus pentosaceus (strain ATCC 25745 / CCUG 21536 / LMG 10740 / 183-1w).